We begin with the raw amino-acid sequence, 139 residues long: Antitoxin HicB 2 (139 aa).

The 51-residue stretch at 87–137 (MLQTRTSNAELARLLGTRPQEIQRIVSLSHSTKIDTIANALNALGKHLELV) folds into the HTH cro/C1-type domain. The H-T-H motif DNA-binding region spans 96–113 (ELARLLGTRPQEIQRIVS).

Belongs to the HicB antitoxin family. As to quaternary structure, probably forms a complex with the probable mRNA interferase HicA2 (its cognate toxin); when complexed with HicA inhibits the toxin activity.

Functionally, antitoxin component of a type II toxin-antitoxin (TA) system. Functions as an mRNA interferase antitoxin preventing effects of the HicA 2 toxin. This is Antitoxin HicB 2 (hicB2) from Photorhabdus laumondii subsp. laumondii (strain DSM 15139 / CIP 105565 / TT01) (Photorhabdus luminescens subsp. laumondii).